The sequence spans 313 residues: Ribosomal RNA small subunit methyltransferase H (313 aa).

Residues 35–37 (GGH), D55, F79, D101, and Q108 each bind S-adenosyl-L-methionine.

It belongs to the methyltransferase superfamily. RsmH family.

It is found in the cytoplasm. The enzyme catalyses cytidine(1402) in 16S rRNA + S-adenosyl-L-methionine = N(4)-methylcytidine(1402) in 16S rRNA + S-adenosyl-L-homocysteine + H(+). Specifically methylates the N4 position of cytidine in position 1402 (C1402) of 16S rRNA. This chain is Ribosomal RNA small subunit methyltransferase H, found in Shigella sonnei (strain Ss046).